Here is a 311-residue protein sequence, read N- to C-terminus: Energy-coupling factor transporter ATP-binding protein EcfA (311 aa).

The ABC transporter domain maps to 2 to 237; that stretch reads IELRDLSYSY…AELIRRASLR (236 aa). ATP is bound at residue 35–42; that stretch reads GPNGAGKS.

Belongs to the ABC transporter superfamily. Energy-coupling factor EcfA family. Forms a stable energy-coupling factor (ECF) transporter complex composed of 2 membrane-embedded substrate-binding proteins (S component), 2 ATP-binding proteins (A component) and 2 transmembrane proteins (T component).

The protein localises to the cell membrane. In terms of biological role, ATP-binding (A) component of a common energy-coupling factor (ECF) ABC-transporter complex. Unlike classic ABC transporters this ECF transporter provides the energy necessary to transport a number of different substrates. This is Energy-coupling factor transporter ATP-binding protein EcfA from Methanothermobacter thermautotrophicus (strain ATCC 29096 / DSM 1053 / JCM 10044 / NBRC 100330 / Delta H) (Methanobacterium thermoautotrophicum).